Here is a 324-residue protein sequence, read N- to C-terminus: Phosphate transport system permease protein PstC 2 (324 aa).

Helical transmembrane passes span 30–50, 90–110, 125–145, 174–194, 237–257, and 290–310; these read ASAA…FLLV, LSSI…AVFL, MVDL…IFVL, AGGG…LPIV, VAAS…VLVI, and PLPT…TFLV. The 230-residue stretch at 85–314 folds into the ABC transmembrane type-1 domain; that stretch reads FMVTALSSIT…VLTFLVNAAA (230 aa).

This sequence belongs to the binding-protein-dependent transport system permease family. CysTW subfamily.

It is found in the cell membrane. Part of the binding-protein-dependent transport system for phosphate; probably responsible for the translocation of the substrate across the membrane. The polypeptide is Phosphate transport system permease protein PstC 2 (pstC2) (Mycobacterium bovis (strain ATCC BAA-935 / AF2122/97)).